The primary structure comprises 169 residues: Probable calcium-binding protein CML13 (169 aa).

Residues 1–26 form a disordered region; the sequence is MSTVKGQTRRERPRGARPHGLTKQKR. Positions 15-24 are enriched in basic residues; it reads GARPHGLTKQ. 4 EF-hand domains span residues 24-59, 60-95, 97-132, and 133-168; these read QKRQ…LGFE, MTEE…KIGE, DSKE…LGEN, and FTYQ…TGYG. 20 residues coordinate Ca(2+): aspartate 37, aspartate 39, serine 41, threonine 43, glutamate 48, aspartate 73, aspartate 75, serine 77, serine 79, glutamate 84, aspartate 110, aspartate 112, asparagine 114, lysine 116, aspartate 121, aspartate 146, asparagine 148, aspartate 150, glutamate 152, and glutamate 157.

Its function is as follows. Potential calcium sensor. The polypeptide is Probable calcium-binding protein CML13 (CML13) (Oryza sativa subsp. japonica (Rice)).